Consider the following 135-residue polypeptide: Large-conductance mechanosensitive channel (135 aa).

2 consecutive transmembrane segments (helical) span residues 9–29 (AFAA…GAAF) and 79–99 (IQTI…LKAI).

This sequence belongs to the MscL family. In terms of assembly, homopentamer.

It is found in the cell inner membrane. In terms of biological role, channel that opens in response to stretch forces in the membrane lipid bilayer. May participate in the regulation of osmotic pressure changes within the cell. The polypeptide is Large-conductance mechanosensitive channel (Aeromonas salmonicida (strain A449)).